Consider the following 227-residue polypeptide: Phosphoribosylformylglycinamidine synthase subunit PurQ (227 aa).

One can recognise a Glutamine amidotransferase type-1 domain in the interval 2 to 226 (KFAVIQFPGS…VKAWKEEQVN (225 aa)). The Nucleophile role is filled by Cys-86. Residues His-195 and Glu-197 contribute to the active site.

Part of the FGAM synthase complex composed of 1 PurL, 1 PurQ and 2 PurS subunits.

The protein resides in the cytoplasm. The catalysed reaction is N(2)-formyl-N(1)-(5-phospho-beta-D-ribosyl)glycinamide + L-glutamine + ATP + H2O = 2-formamido-N(1)-(5-O-phospho-beta-D-ribosyl)acetamidine + L-glutamate + ADP + phosphate + H(+). It carries out the reaction L-glutamine + H2O = L-glutamate + NH4(+). It functions in the pathway purine metabolism; IMP biosynthesis via de novo pathway; 5-amino-1-(5-phospho-D-ribosyl)imidazole from N(2)-formyl-N(1)-(5-phospho-D-ribosyl)glycinamide: step 1/2. In terms of biological role, part of the phosphoribosylformylglycinamidine synthase complex involved in the purines biosynthetic pathway. Catalyzes the ATP-dependent conversion of formylglycinamide ribonucleotide (FGAR) and glutamine to yield formylglycinamidine ribonucleotide (FGAM) and glutamate. The FGAM synthase complex is composed of three subunits. PurQ produces an ammonia molecule by converting glutamine to glutamate. PurL transfers the ammonia molecule to FGAR to form FGAM in an ATP-dependent manner. PurS interacts with PurQ and PurL and is thought to assist in the transfer of the ammonia molecule from PurQ to PurL. The polypeptide is Phosphoribosylformylglycinamidine synthase subunit PurQ (Listeria monocytogenes serovar 1/2a (strain ATCC BAA-679 / EGD-e)).